Consider the following 329-residue polypeptide: GTPase Obg (329 aa).

One can recognise an Obg domain in the interval 1 to 159 (MQFIDQARIT…WFLQLELKLL (159 aa)). The OBG-type G domain maps to 160–328 (AEVGIIGLPN…LLAQVWKELG (169 aa)). Residues 166-173 (GLPNAGKS), 191-195 (FTTLV), 213-216 (DIPG), 280-283 (NKQE), and 309-311 (SAA) contribute to the ATP site. Positions 173 and 193 each coordinate Mg(2+).

This sequence belongs to the TRAFAC class OBG-HflX-like GTPase superfamily. OBG GTPase family. In terms of assembly, monomer. Mg(2+) serves as cofactor.

The protein localises to the cytoplasm. Functionally, an essential GTPase which binds GTP, GDP and possibly (p)ppGpp with moderate affinity, with high nucleotide exchange rates and a fairly low GTP hydrolysis rate. Plays a role in control of the cell cycle, stress response, ribosome biogenesis and in those bacteria that undergo differentiation, in morphogenesis control. The protein is GTPase Obg of Prochlorococcus marinus (strain MIT 9313).